A 308-amino-acid chain; its full sequence is Olfactory receptor OR9H1 (308 aa).

The Extracellular segment spans residues 1–26 (MVNFTHVSEFVLLGFQGGPGMQAMLF). The chain crosses the membrane as a helical span at residues 27-47 (LIFLILYGIAVVGNLGMIVII). The Cytoplasmic segment spans residues 48–58 (WVDAHLHTPMY). A helical membrane pass occupies residues 59 to 81 (AFLQSLSLLDICYSSTIAPRALA). Residues 82 to 95 (NSMQEDHTISFGGC) are Extracellular-facing. Cys-95 and Cys-177 are disulfide-bonded. A helical transmembrane segment spans residues 96–116 (AAQFFFLSLFGITEAFLLAAM). The Cytoplasmic portion of the chain corresponds to 117–137 (AYDRFIAICNPLLYSVSMSHQ). A helical membrane pass occupies residues 138 to 158 (VCVLLISGSYLWGVVNAIAQT). Topologically, residues 159–203 (TMTFRLPFCGSNEINDFFCDVPPLLSLSCSDTFINQLVLLGLCGS) are extracellular. Residues 204-224 (IIVSTFLIVLVSYIYIISTIL) traverse the membrane as a helical segment. Topologically, residues 225 to 245 (RIPTMQGCQKAFSTCASHLTG) are cytoplasmic. Residues 246–266 (VCLFFGTVFFMYAQPSAIFFM) form a helical membrane-spanning segment. The Extracellular segment spans residues 267 to 269 (EQS). Residues 270–290 (KIVSIFYTMVIPMLNPLIYSL) traverse the membrane as a helical segment. Residues 291–308 (RNKEVKQALRRSMQKLSL) lie on the Cytoplasmic side of the membrane.

The protein belongs to the G-protein coupled receptor 1 family.

Its subcellular location is the cell membrane. Functionally, odorant receptor. In Homo sapiens (Human), this protein is Olfactory receptor OR9H1.